The sequence spans 500 residues: MASMLLAQRLACSFQHSYRLLVPGSRHISQAAAKVDVEFDYDGPLMKTEVPGPRSQELMKQLNIIQNAEAVHFFCNYEESRGNYLVDVDGNRMLDLYSQISSVPIGYSHPALLKLIQQPQNASMFVNRPALGILPPENFVEKLRQSLLSVAPKGMSQLITMACGSCSNENALKTIFMWYRSKERGQRGFSQEELETCMINQAPGCPDYSILSFMGAFHGRTMGCLATTHSKAIHKIDIPSFDWPIAPFPRLKYPLEEFVKENQQEEARCLEEVEDLIVKYRKKKKTVAGIIVEPIQSEGGDNHASDDFFRKLRDIARKHGCAFLVDEVQTGGGCTGKFWAHEHWGLDDPADVMTFSKKMMTGGFFHKEEFRPNAPYRIFNTWLGDPSKNLLLAEVINIIKREDLLNNAAHAGKALLTGLLDLQARYPQFISRVRGRGTFCSFDTPDDSIRNKLILIARNKGVVLGGCGDKSIRFRPTLVFRDHHAHLFLNIFSDILADFK.

Residues 1 to 28 constitute a mitochondrion transit peptide; sequence MASMLLAQRLACSFQHSYRLLVPGSRHI. Cysteine 163 provides a ligand contact to [2Fe-2S] cluster. A pyridoxal 5'-phosphate-binding site is contributed by 164–165; that stretch reads GS. [2Fe-2S] cluster is bound at residue cysteine 166. Substrate is bound at residue arginine 220. Lysine 231 is modified (N6-succinyllysine). Lysine 252 carries the N6-acetyllysine; alternate modification. Lysine 252 bears the N6-succinyllysine; alternate mark. Residues lysine 279 and lysine 318 each carry the N6-acetyllysine modification. Lysine 357 is subject to N6-(pyridoxal phosphate)lysine. Threonine 381 provides a ligand contact to pyridoxal 5'-phosphate. Position 413 is an N6-acetyllysine; alternate (lysine 413). Lysine 413 bears the N6-succinyllysine; alternate mark. N6-acetyllysine is present on residues lysine 452 and lysine 470.

Belongs to the class-III pyridoxal-phosphate-dependent aminotransferase family. Homodimer; disulfide-linked. Requires pyridoxal 5'-phosphate as cofactor. [2Fe-2S] cluster serves as cofactor. In terms of tissue distribution, liver &gt; pancreas &gt; brain &gt; kidney &gt; heart &gt; placenta.

It is found in the mitochondrion matrix. The catalysed reaction is 4-aminobutanoate + 2-oxoglutarate = succinate semialdehyde + L-glutamate. The enzyme catalyses (S)-3-amino-2-methylpropanoate + 2-oxoglutarate = 2-methyl-3-oxopropanoate + L-glutamate. Functionally, catalyzes the conversion of gamma-aminobutyrate and L-beta-aminoisobutyrate to succinate semialdehyde and methylmalonate semialdehyde, respectively. Can also convert delta-aminovalerate and beta-alanine. This chain is 4-aminobutyrate aminotransferase, mitochondrial, found in Homo sapiens (Human).